The sequence spans 798 residues: MTDRVTHRVSLDDLNLEKQKFDSKDDIKPWLQDNLQSTKGINVVIERSDTSKIIFKCKNKEKKTKIVESKKTASKTMIRKHTSCPFKIRANYSVRNKVWTLSIVSDEHDHVVDLPRSFVGKNLISNTIPGSSLNVLDSVAPRSNKKGIKPTSEIANTPSVTSYSPSCAVKRNEDVDAPKISSKKARNLTKKPSTQSTRSSSSSDGSSIVSFGSLTSQSSSTSLPENYKGQVPTSMDSMVVEESLTGKSLKPAASHPVKRKNMKANTMKKSKKLKQNPIVVSPIEEDSNLNSFDDANIDLQRQQSLQSPLSHLVQNQDPISLEQNPQLHTVYPQPRHSKQSSSLLKKNQQQDRIPDNMPLQPQENNRTLQNFPLNQFNANEILQNVQQVVRETVKSEILDSPNIDNTYKTDMMDSFVSSVILDYKDYLSSQFLFSLKQNLYDRREATHTNVDLEQNGSNENLFDEQPQHKHNHQHNENQFSYQSQIQNQRQNQNQNQGQNQNQNQSQSQTPGQNSNQNDSQTQIPLQSQTPQDRKSAMQQNWLPGSTPGVGGLIRLSPLLNDNDNNEYAAVAAAAVVGSTPGNPNGNSLENFTHLPGINSSTLNYLMQLPHPSANPNSGGVSSSQPASLMSLQGHQGLLQQQQQQQPMFSMQNSGQQLPPLSSIPKLPSSNNANVNLNSSSTLPLPLNNTGPTLNPSSLLKSTSRNSTNSGNINVNNINNSNNNSNSAFNSVFLNSSITTNPAFIFNSQGNPTNSNQSMVNSIMTTNSNKDGTATSNNNSSGNTSNNLLNDMPNYGPGW.

Disordered regions lie at residues 142 to 274 (RSNK…KKLK), 331 to 365 (YPQP…QENN), 449 to 545 (NVDL…LPGS), 642 to 718 (QQQQ…NNIN), and 748 to 798 (QGNP…GPGW). Polar residues predominate over residues 153 to 165 (EIANTPSVTSYSP). Residues 193–223 (STQSTRSSSSSDGSSIVSFGSLTSQSSSTSL) show a composition bias toward low complexity. The segment covering 256 to 274 (PVKRKNMKANTMKKSKKLK) has biased composition (basic residues). A compositionally biased stretch (polar residues) spans 449 to 460 (NVDLEQNGSNEN). A compositionally biased stretch (low complexity) spans 476–517 (ENQFSYQSQIQNQRQNQNQNQGQNQNQNQSQSQTPGQNSNQN). 2 stretches are compositionally biased toward polar residues: residues 518–543 (DSQT…NWLP) and 646–656 (PMFSMQNSGQQ). 2 stretches are compositionally biased toward low complexity: residues 657 to 695 (LPPL…TLNP) and 705 to 718 (NSTN…NNIN). Polar residues predominate over residues 748 to 773 (QGNPTNSNQSMVNSIMTTNSNKDGTA). The span at 774-789 (TSNNNSSGNTSNNLLN) shows a compositional bias: low complexity.

The protein resides in the nucleus. Transcription factor involved in iron metabolism, oxidative stress, surface adhesion, hyphal development and virulence. Functions as a negative regulator of MRS4 expression through the CACCC AFT-type sequence in a gene dose-dependent fashion. Acts as a repressor in flocculation, plastic adhesion, and surface hydrophobicity. The sequence is that of Iron-regulated transcriptional activator AFT2 (AFT2) from Candida albicans (strain SC5314 / ATCC MYA-2876) (Yeast).